We begin with the raw amino-acid sequence, 467 residues long: 3-isopropylmalate dehydratase large subunit (467 aa).

[4Fe-4S] cluster contacts are provided by Cys348, Cys409, and Cys412.

Belongs to the aconitase/IPM isomerase family. LeuC type 1 subfamily. In terms of assembly, heterodimer of LeuC and LeuD. [4Fe-4S] cluster serves as cofactor.

The catalysed reaction is (2R,3S)-3-isopropylmalate = (2S)-2-isopropylmalate. Its pathway is amino-acid biosynthesis; L-leucine biosynthesis; L-leucine from 3-methyl-2-oxobutanoate: step 2/4. In terms of biological role, catalyzes the isomerization between 2-isopropylmalate and 3-isopropylmalate, via the formation of 2-isopropylmaleate. The protein is 3-isopropylmalate dehydratase large subunit of Thiobacillus denitrificans (strain ATCC 25259 / T1).